Here is a 718-residue protein sequence, read N- to C-terminus: Cyclomaltodextrin glucanotransferase (718 aa).

The signal sequence occupies residues M1–A34. An A1 region spans residues D35–P172. Residues D61, N63, N66, and N67 each coordinate Ca(2+). C77 and C84 are joined by a disulfide. Ca(2+) is bound by residues G85 and D87. A substrate-binding site is contributed by Y134–W135. Residue N173 coordinates Ca(2+). Residues N173–H236 form a b region. H174 provides a ligand contact to substrate. I224 is a Ca(2+) binding site. Substrate is bound by residues N227–D230 and D230. Ca(2+) is bound at residue D233. The tract at residues N237–Y440 is A2. R261 lines the substrate pocket. The active-site Nucleophile is the D263. Residues K266 to H267 and H267 each bind substrate. Residue H267 coordinates Ca(2+). E291 acts as the Proton donor in catalysis. Substrate-binding residues include H361, D405, and R409. A c region spans residues G441–A528. The interval E529 to L614 is d. Positions P532 to T612 constitute an IPT/TIG domain. A CBM20 domain is found at I613 to Q718. Residues T615–Q718 are e.

Belongs to the glycosyl hydrolase 13 family. As to quaternary structure, monomer. Requires Ca(2+) as cofactor.

The protein localises to the secreted. The catalysed reaction is Cyclizes part of a (1-&gt;4)-alpha-D-glucan chain by formation of a (1-&gt;4)-alpha-D-glucosidic bond.. This Niallia circulans (Bacillus circulans) protein is Cyclomaltodextrin glucanotransferase.